The primary structure comprises 58 residues: Ribulose bisphosphate carboxylase large chain (58 aa).

Positions 1-2 (MS) are excised as a propeptide. Pro-3 is subject to N-acetylproline. The residue at position 14 (Lys-14) is an N6,N6,N6-trimethyllysine.

Belongs to the RuBisCO large chain family. Type I subfamily. As to quaternary structure, heterohexadecamer of 8 large chains and 8 small chains.

The protein resides in the plastid. It is found in the chloroplast. It catalyses the reaction 2 (2R)-3-phosphoglycerate + 2 H(+) = D-ribulose 1,5-bisphosphate + CO2 + H2O. It carries out the reaction D-ribulose 1,5-bisphosphate + O2 = 2-phosphoglycolate + (2R)-3-phosphoglycerate + 2 H(+). Functionally, ruBisCO catalyzes two reactions: the carboxylation of D-ribulose 1,5-bisphosphate, the primary event in carbon dioxide fixation, as well as the oxidative fragmentation of the pentose substrate in the photorespiration process. Both reactions occur simultaneously and in competition at the same active site. The sequence is that of Ribulose bisphosphate carboxylase large chain (rbcL) from Euphorbia characias (Albanian spurge).